The chain runs to 436 residues: Cytochrome b5-related protein (436 aa).

One can recognise a Cytochrome b5 heme-binding domain in the interval 16–100 (PTYRNSALIT…IAKYKVRDAA (85 aa)). Heme is bound by residues histidine 59 and histidine 82.

Muscle.

May play a role in muscle cell metabolism. This Drosophila melanogaster (Fruit fly) protein is Cytochrome b5-related protein (Cyt-b5-r).